A 330-amino-acid chain; its full sequence is tRNA U34 carboxymethyltransferase (330 aa).

Residues Lys91, Trp105, Lys110, Gly130, 152-154 (DPS), 181-182 (IE), Met196, Tyr200, and Arg315 each bind carboxy-S-adenosyl-L-methionine.

It belongs to the class I-like SAM-binding methyltransferase superfamily. CmoB family. As to quaternary structure, homotetramer.

It catalyses the reaction carboxy-S-adenosyl-L-methionine + 5-hydroxyuridine(34) in tRNA = 5-carboxymethoxyuridine(34) in tRNA + S-adenosyl-L-homocysteine + H(+). In terms of biological role, catalyzes carboxymethyl transfer from carboxy-S-adenosyl-L-methionine (Cx-SAM) to 5-hydroxyuridine (ho5U) to form 5-carboxymethoxyuridine (cmo5U) at position 34 in tRNAs. This is tRNA U34 carboxymethyltransferase from Shewanella pealeana (strain ATCC 700345 / ANG-SQ1).